The sequence spans 270 residues: Phosphoserine phosphatase (270 aa).

Catalysis depends on Asp67, which acts as the Nucleophile. Mg(2+)-binding residues include Asp67 and Asp69. Catalysis depends on Asp69, which acts as the Proton donor. Substrate-binding positions include Glu76, Arg112, 156–157 (SG), and Lys205. Position 227 (Asp227) interacts with Mg(2+).

It belongs to the HAD-like hydrolase superfamily. SerB family. Mg(2+) serves as cofactor.

It catalyses the reaction O-phospho-L-serine + H2O = L-serine + phosphate. The catalysed reaction is O-phospho-D-serine + H2O = D-serine + phosphate. Its pathway is amino-acid biosynthesis; L-serine biosynthesis; L-serine from 3-phospho-D-glycerate: step 3/3. Catalyzes the last step in the biosynthesis of serine from carbohydrates. The reaction mechanism proceeds via the formation of a phosphoryl-enzyme intermediates. The chain is Phosphoserine phosphatase (aay) from Drosophila melanogaster (Fruit fly).